A 93-amino-acid polypeptide reads, in one-letter code: Small ribosomal subunit protein uS19 (93 aa).

This sequence belongs to the universal ribosomal protein uS19 family.

Its function is as follows. Protein S19 forms a complex with S13 that binds strongly to the 16S ribosomal RNA. The protein is Small ribosomal subunit protein uS19 of Geotalea daltonii (strain DSM 22248 / JCM 15807 / FRC-32) (Geobacter daltonii).